Consider the following 206-residue polypeptide: HTH-type transcriptional regulator Hpr (206 aa).

The HTH marR-type domain maps to 13–157; it reads ALLFSQRMAQ…MMCIIRNIYG (145 aa). Residues 63 to 86 constitute a DNA-binding region (H-T-H motif); that stretch reads ISEIAKFGVMHVSTAFNFSKKLEE. The segment at 186 to 206 is disordered; it reads SEELEDSADAAEKAAKANQIV.

Homodimer.

Negative regulator of protease production and sporulation. This is HTH-type transcriptional regulator Hpr from Bacillus pumilus (strain SAFR-032).